A 104-amino-acid polypeptide reads, in one-letter code: Thiosulfate sulfurtransferase PspE (104 aa).

The signal sequence occupies residues 1-19 (MFKKGLLALALVFSLPVFA). One can recognise a Rhodanese domain in the interval 20-104 (AEHWIDVRVP…KDIAMPKVKG (85 aa)). The Cysteine persulfide intermediate role is filled by Cys67.

In terms of assembly, monomer.

It localises to the periplasm. It carries out the reaction thiosulfate + hydrogen cyanide = thiocyanate + sulfite + 2 H(+). Its activity is regulated as follows. Inhibited by thiosulfate above 100 mM, particularly at low cyanide concentrations (&lt;5 mM). Inhibited by sodium sulfate or sodium chloride at 0.25 M which gives around 50% inhibition of rhodanese activity. Addition of sodium phosphate at the same concentration results in about 65% inhibition. Sulfite strongly inhibits PspE activity (1 mM sodium sulfite resulted in more than 50% inhibition of rhodanese activity). In terms of biological role, the phage shock protein (psp) operon (pspABCDE) may play a significant role in the competition for survival under nutrient- or energy-limited conditions. PspE catalyzes the sulfur-transfer reaction from thiosulfate to cyanide, to form sulfite and thiocyanate. Also able to use dithiol (dithiothreitol) as an alternate sulfur acceptor. Also possesses a very low mercaptopyruvate sulfurtransferase activity. The sequence is that of Thiosulfate sulfurtransferase PspE (pspE) from Escherichia coli (strain K12).